A 463-amino-acid chain; its full sequence is Glucagon-like peptide 1 receptor (463 aa).

Residues 1–21 (MAVTPSLLRLALLLLGAVGRA) form the signal peptide. Residues 22-139 (GPRPQGATVS…KQGERNSPEE (118 aa)) are Extracellular-facing. 3 disulfide bridges follow: cysteine 46/cysteine 71, cysteine 62/cysteine 104, and cysteine 85/cysteine 126. N-linked (GlcNAc...) asparagine glycans are attached at residues asparagine 63, asparagine 82, and asparagine 115. A helical membrane pass occupies residues 140–164 (QLLSLYIIYTVGYALSFSALVIASA). Over 165–175 (ILVSFRHLHCT) the chain is Cytoplasmic. A helical transmembrane segment spans residues 176-201 (RNYIHLNLFASFILRALSVFIKDAAL). Residues 202-227 (KWMYSTAAQQHQWDGLLSYQDSLGCR) are Extracellular-facing. A disulfide bridge connects residues cysteine 226 and cysteine 296. Residues 228–251 (LVFLLMQYCVAANYYWLLVEGVYL) traverse the membrane as a helical segment. Over 252 to 265 (YTLLAFSVFSEQRI) the chain is Cytoplasmic. Residues 266–290 (FKLYLSIGWGVPLLFVIPWGIVKYL) form a helical membrane-spanning segment. Over 291-305 (YEDEGCWTRNSNMNY) the chain is Extracellular. The chain crosses the membrane as a helical span at residues 306-328 (WLIIRLPILFAIGVNFLVFIRVI). Over 329–348 (CIVIAKLKANLMCKTDIKCR) the chain is Cytoplasmic. Cysteine 341 bears the ADP-ribosylcysteine mark. Arginine 348 is modified (ADP-ribosylarginine). The chain crosses the membrane as a helical span at residues 349-370 (LAKSTLTLIPLLGTHEVIFAFV). The important for allosteric inhibitor binding stretch occupies residues 352-355 (STLT). The Extracellular segment spans residues 371–383 (MDEHARGTLRFVK). The chain crosses the membrane as a helical span at residues 384 to 404 (LFTELSFTSFQGFMVAVLYCF). The Cytoplasmic segment spans residues 405 to 463 (VNNEVQMEFRKSWERWRLERLNIQRDSSMKPLKCPTSSVSSGATVGSSVYAATCQNSCS).

The protein belongs to the G-protein coupled receptor 2 family. May form homodimers and heterodimers with GIPR. In terms of processing, N-glycosylation enhances cell surface expression and lengthens receptor half-life by preventing degradation in the ER. Pancreatic islets, stomach, lung, rat insulinoma cell line.

Its subcellular location is the cell membrane. In terms of biological role, G-protein coupled receptor for glucagon-like peptide 1 (GLP-1). Ligand binding triggers activation of a signaling cascade that leads to the activation of adenylyl cyclase and increased intracellular cAMP levels. Plays a role in regulating insulin secretion in response to GLP-1. The polypeptide is Glucagon-like peptide 1 receptor (Glp1r) (Rattus norvegicus (Rat)).